Consider the following 293-residue polypeptide: tRNA (guanine(9)-N1)-methyltransferase (293 aa).

The interval 1–31 is disordered; that stretch reads MSNDEINQNEEKVKRTPPLPPVPEGMSKKQW. At Thr-16 the chain carries Phosphothreonine. A coiled-coil region spans residues 32 to 61; the sequence is KKMCKRQRWEENKAKYNAERRVKKKRLRHE. One can recognise an SAM-dependent MTase TRM10-type domain in the interval 83-279; sequence EPRINVNQTD…SVLPPRKLDA (197 aa). Residues 186–187, Gly-206, 210–214, Cys-218, Leu-232, and 244–246 contribute to the S-adenosyl-L-methionine site; these read LT, DKNRY, and RVL. The active-site Proton acceptor is Asp-210. Ser-283 is subject to Phosphoserine.

This sequence belongs to the class IV-like SAM-binding methyltransferase superfamily. TRM10 family. As to quaternary structure, monomer.

Its subcellular location is the cytoplasm. It localises to the nucleus. The enzyme catalyses guanosine(9) in tRNA + S-adenosyl-L-methionine = N(1)-methylguanosine(9) in tRNA + S-adenosyl-L-homocysteine + H(+). Its function is as follows. S-adenosyl-L-methionine-dependent guanine N(1)-methyltransferase that catalyzes the formation of N(1)-methylguanine at position 9 (m1G9) in cytoplasmic tRNAs. The sequence is that of tRNA (guanine(9)-N1)-methyltransferase from Saccharomyces cerevisiae (strain ATCC 204508 / S288c) (Baker's yeast).